Reading from the N-terminus, the 291-residue chain is ATP synthase gamma chain (291 aa).

Belongs to the ATPase gamma chain family. In terms of assembly, F-type ATPases have 2 components, CF(1) - the catalytic core - and CF(0) - the membrane proton channel. CF(1) has five subunits: alpha(3), beta(3), gamma(1), delta(1), epsilon(1). CF(0) has three main subunits: a, b and c.

Its subcellular location is the cell inner membrane. Functionally, produces ATP from ADP in the presence of a proton gradient across the membrane. The gamma chain is believed to be important in regulating ATPase activity and the flow of protons through the CF(0) complex. The polypeptide is ATP synthase gamma chain (Caulobacter vibrioides (strain NA1000 / CB15N) (Caulobacter crescentus)).